The primary structure comprises 860 residues: Leucine--tRNA ligase (860 aa).

Residues 42 to 52 (PYPSGRLHMGH) carry the 'HIGH' region motif. Residues 619–623 (KMSKS) carry the 'KMSKS' region motif. Lysine 622 is a binding site for ATP.

This sequence belongs to the class-I aminoacyl-tRNA synthetase family.

The protein localises to the cytoplasm. It catalyses the reaction tRNA(Leu) + L-leucine + ATP = L-leucyl-tRNA(Leu) + AMP + diphosphate. The sequence is that of Leucine--tRNA ligase from Salmonella paratyphi B (strain ATCC BAA-1250 / SPB7).